A 134-amino-acid polypeptide reads, in one-letter code: Small ribosomal subunit protein uS17c (134 aa).

A chloroplast-targeting transit peptide spans histidine 1 to alanine 37. The tract at residues phenylalanine 106–glutamate 134 is disordered.

This sequence belongs to the universal ribosomal protein uS17 family. In terms of assembly, part of the 30S ribosomal subunit.

It is found in the plastid. Its subcellular location is the chloroplast. Functionally, one of the primary rRNA binding proteins, it binds specifically to the 5'-end of 16S ribosomal RNA. The chain is Small ribosomal subunit protein uS17c (RPS17) from Pisum sativum (Garden pea).